The chain runs to 938 residues: Breast cancer type 2 susceptibility protein homolog (938 aa).

Composition is skewed to basic and acidic residues over residues 320-339 (LEPSFQKEQKSSKDSNESKI) and 409-425 (NSIKRTDEEQPEKETPN). Disordered stretches follow at residues 320–359 (LEPSFQKEQKSSKDSNESKIRAPSKPSCDITEKNEGTTVL) and 409–434 (NSIKRTDEEQPEKETPNKSRSTSSHQ). BRCA2 repeat units lie at residues 537-571 (AEPEFCGFRTASNKAIPISEKMKIKTAEFMAEFQY), 638-672 (NEPQFFGFRTASKKAIEITEAMEKRGAMFLAQSRA), and 713-747 (SETEFFGFRTASNKGIVISENTKMKVAQFMSEFQA). Residues 870 to 879 (SSTETSTSCA) show a composition bias toward polar residues. Residues 870-938 (SSTETSTSCA…RRLGLSRSRY (69 aa)) form a disordered region. Residues 898–915 (ADRDLNRSKDCAKNRQDA) are compositionally biased toward basic and acidic residues. Basic residues predominate over residues 926-938 (KKSRRLGLSRSRY).

In terms of assembly, interacts with Rad9 and spn-A/Rad51.

It is found in the nucleus. Involved in and required for double-strand break repair by meiotic and mitotic homologous recombination. During meiosis, has a dual role in the repair of meiotic double-stranded breaks and the efficient activation of the meiotic recombination checkpoint. This is Breast cancer type 2 susceptibility protein homolog from Drosophila sechellia (Fruit fly).